Here is a 341-residue protein sequence, read N- to C-terminus: Ribosomal RNA small subunit methyltransferase H (341 aa).

S-adenosyl-L-methionine-binding positions include 47–49 (GGY), Asp64, Phe91, Asp109, and Gln116.

Belongs to the methyltransferase superfamily. RsmH family.

It is found in the cytoplasm. It catalyses the reaction cytidine(1402) in 16S rRNA + S-adenosyl-L-methionine = N(4)-methylcytidine(1402) in 16S rRNA + S-adenosyl-L-homocysteine + H(+). In terms of biological role, specifically methylates the N4 position of cytidine in position 1402 (C1402) of 16S rRNA. This is Ribosomal RNA small subunit methyltransferase H from Rhizobium rhizogenes (strain K84 / ATCC BAA-868) (Agrobacterium radiobacter).